We begin with the raw amino-acid sequence, 310 residues long: tRNA-dihydrouridine(16) synthase (310 aa).

FMN-binding positions include 7 to 9 and Gln-68; that span reads PMQ. Catalysis depends on Cys-98, which acts as the Proton donor. FMN contacts are provided by residues Lys-139, 200 to 202, and 224 to 225; these read NGE and GR.

It belongs to the Dus family. DusC subfamily. The cofactor is FMN.

It carries out the reaction 5,6-dihydrouridine(16) in tRNA + NADP(+) = uridine(16) in tRNA + NADPH + H(+). The catalysed reaction is 5,6-dihydrouridine(16) in tRNA + NAD(+) = uridine(16) in tRNA + NADH + H(+). Catalyzes the synthesis of 5,6-dihydrouridine (D), a modified base found in the D-loop of most tRNAs, via the reduction of the C5-C6 double bond in target uridines. Specifically modifies U16 in tRNAs. This is tRNA-dihydrouridine(16) synthase from Haemophilus influenzae (strain ATCC 51907 / DSM 11121 / KW20 / Rd).